A 743-amino-acid chain; its full sequence is Polyribonucleotide nucleotidyltransferase (743 aa).

Mg(2+) is bound by residues aspartate 489 and aspartate 495. Residues 556–618 (PRIEKMHIGK…PCIDAAIGMI (63 aa)) enclose the KH domain. An S1 motif domain is found at 628 to 698 (GETYPGKITS…KTGKFKLSRK (71 aa)). The tract at residues 704–743 (PEGYVEPQPRERRERREGGREGGRNFERRGGDRDHREPRG) is disordered.

It belongs to the polyribonucleotide nucleotidyltransferase family. Requires Mg(2+) as cofactor.

Its subcellular location is the cytoplasm. It carries out the reaction RNA(n+1) + phosphate = RNA(n) + a ribonucleoside 5'-diphosphate. Functionally, involved in mRNA degradation. Catalyzes the phosphorolysis of single-stranded polyribonucleotides processively in the 3'- to 5'-direction. The protein is Polyribonucleotide nucleotidyltransferase of Porphyromonas gingivalis (strain ATCC BAA-308 / W83).